A 317-amino-acid polypeptide reads, in one-letter code: Heme A synthase (317 aa).

The Cytoplasmic segment spans residues 1 to 6 (MQRSLK). Residues 7–27 (WFASTTTVAMLFVLIGGALVT) form a helical membrane-spanning segment. At 28–54 (KTDSGMGCGRSWPLCHGQWIPDDITPQ) the chain is on the extracellular side. An intrachain disulfide couples Cys35 to Cys42. The helical transmembrane segment at 55–75 (LVIELSHRLVSGLAAIMVLIL) threads the bilayer. Glu58 is a catalytic residue. Heme o is bound at residue His61. At 76–91 (CIRSWRVMGHVRETKP) the chain is on the cytoplasmic side. A helical membrane pass occupies residues 92-112 (LAVLSFVFLVLQSLIGAAAVV). At 113–123 (WGQSDFVMALH) the chain is on the extracellular side. Position 123 (His123) interacts with heme o. Residues 124–144 (FGISLISFAAVLLLTLLIFVV) form a helical membrane-spanning segment. The Cytoplasmic segment spans residues 145–159 (DKKFSPTSLQLDGQM). A helical transmembrane segment spans residues 160–180 (RFHIYGIIIYSYLVVYTGALV). Residues 181-214 (RHTNASLACPSWPLCAKSRLLPVQFHEWVQMGHR) are Extracellular-facing. A disulfide bridge connects residues Cys189 and Cys195. Residue His213 coordinates heme b. Residues 215–235 (LAAAVIIIWIAVATVHAARYY) traverse the membrane as a helical segment. Residues 236-243 (REQPVIYY) are Cytoplasmic-facing. Residues 244–264 (GWIISLLLVLAQMVTGALVVF) traverse the membrane as a helical segment. Residues 265 to 272 (TELNLYIS) lie on the Extracellular side of the membrane. Residues 273–293 (LAHAFFISCLFGVLSYLLLLA) form a helical membrane-spanning segment. His275 provides a ligand contact to heme b. The Cytoplasmic portion of the chain corresponds to 294-317 (LRTRRRPATAAGRSVEDTASAPLK).

Belongs to the COX15/CtaA family. Type 1 subfamily. Interacts with CtaB. The cofactor is heme b.

The protein resides in the cell membrane. It catalyses the reaction Fe(II)-heme o + 2 A + H2O = Fe(II)-heme a + 2 AH2. The protein operates within porphyrin-containing compound metabolism; heme A biosynthesis; heme A from heme O: step 1/1. Functionally, catalyzes the conversion of heme O to heme A by two successive hydroxylations of the methyl group at C8. The first hydroxylation forms heme I, the second hydroxylation results in an unstable dihydroxymethyl group, which spontaneously dehydrates, resulting in the formyl group of heme A. This chain is Heme A synthase, found in Geobacillus thermodenitrificans.